The primary structure comprises 521 residues: Glucosidase 2 subunit beta (521 aa).

Positions methionine 1–alanine 14 are cleaved as a signal peptide. Serine 24 is modified (phosphoserine). 2 consecutive LDL-receptor class A domains span residues phenylalanine 37–proline 71 and alanine 69–glutamate 113. Intrachain disulfides connect cysteine 39–cysteine 58 and cysteine 56–cysteine 70. Aspartate 49 serves as a coordination point for substrate. Residues glutamine 50, aspartate 53, tyrosine 55, aspartate 57, aspartate 63, and glutamate 64 each contribute to the Ca(2+) site. Aspartate 53 contacts substrate. N-linked (GlcNAc...) asparagine glycosylation occurs at asparagine 72. 3 cysteine pairs are disulfide-bonded: cysteine 77-cysteine 99, cysteine 97-cysteine 112, and cysteine 100-cysteine 116. Phosphoserine; by PKC is present on serine 89. Residues arginine 91, aspartate 94, valine 96, aspartate 98, aspartate 104, and glutamate 105 each coordinate Ca(2+). At lysine 166 the chain carries N6-succinyllysine. Serine 168 is modified (phosphoserine). EF-hand domains are found at residues arginine 209–glycine 244 and aspartate 245–proline 290. The Ca(2+) site is built by aspartate 222, asparagine 224, aspartate 226, methionine 228, and glutamate 233. 2 disordered regions span residues aspartate 226–serine 267 and tyrosine 280–proline 350. Composition is skewed to acidic residues over residues aspartate 241–alanine 253 and threonine 308–alanine 331. Positions proline 332 to proline 343 are enriched in pro residues. Residues serine 376 and serine 383 each carry the phosphoserine; by PKC modification. Residues serine 406 to glutamate 507 enclose the MRH domain. A disulfide bridge links cysteine 408 with cysteine 421. A Phosphoserine; by PKC modification is found at serine 427. 2 disulfides stabilise this stretch: cysteine 464–cysteine 493 and cysteine 478–cysteine 505. Asparagine 469 carries an N-linked (GlcNAc...) asparagine glycan. A Prevents secretion from ER motif is present at residues histidine 518–leucine 521.

Heterodimer of a catalytic alpha subunit (GANAB) and a beta subunit (PRKCSH). Binds glycosylated PTPRC. In terms of tissue distribution, expressed in kidney (at protein level).

It is found in the endoplasmic reticulum. The protein operates within glycan metabolism; N-glycan metabolism. Regulatory subunit of glucosidase II that cleaves sequentially the 2 innermost alpha-1,3-linked glucose residues from the Glc(2)Man(9)GlcNAc(2) oligosaccharide precursor of immature glycoproteins. Required for efficient PKD1/Polycystin-1 biogenesis and trafficking to the plasma membrane of the primary cilia. The protein is Glucosidase 2 subunit beta of Mus musculus (Mouse).